Reading from the N-terminus, the 544-residue chain is 4-coumarate:CoA ligase 1 (544 aa).

This sequence belongs to the ATP-dependent AMP-binding enzyme family. In terms of assembly, monomer. As to expression, mostly expressed in flower organs, with highest levels in corollas, and, to a lesser extent, in tubes, sepals, pistils, stamen and ovaries. Also present at low levels in leaves.

The protein localises to the cytoplasm. The protein resides in the cytosol. The enzyme catalyses (E)-4-coumarate + ATP + CoA = (E)-4-coumaroyl-CoA + AMP + diphosphate. The catalysed reaction is (E)-caffeate + ATP + CoA = (E)-caffeoyl-CoA + AMP + diphosphate. It carries out the reaction benzoate + ATP + CoA = benzoyl-CoA + AMP + diphosphate. It catalyses the reaction (E)-cinnamate + ATP + CoA = (E)-cinnamoyl-CoA + AMP + diphosphate. The enzyme catalyses (E)-ferulate + ATP + CoA = (E)-feruloyl-CoA + AMP + diphosphate. It participates in phenylpropanoid metabolism; trans-cinnamate biosynthesis. The protein operates within phytoalexin biosynthesis; 3,4',5-trihydroxystilbene biosynthesis; 3,4',5-trihydroxystilbene from trans-4-coumarate: step 1/2. Its function is as follows. Catalyzes the formation of CoA esters of trans-cinnamic acid, 4-coumaric acid, ferulic acid, benzoic acid and caffeic acid. This is 4-coumarate:CoA ligase 1 from Petunia hybrida (Petunia).